The sequence spans 252 residues: 5'-nucleotidase SurE (252 aa).

Residues aspartate 8, aspartate 9, serine 39, and asparagine 91 each contribute to the a divalent metal cation site.

Belongs to the SurE nucleotidase family. The cofactor is a divalent metal cation.

Its subcellular location is the cytoplasm. It catalyses the reaction a ribonucleoside 5'-phosphate + H2O = a ribonucleoside + phosphate. Its function is as follows. Nucleotidase that shows phosphatase activity on nucleoside 5'-monophosphates. This chain is 5'-nucleotidase SurE, found in Legionella pneumophila (strain Corby).